The chain runs to 318 residues: Large ribosomal subunit protein uL10 (318 aa).

Tyr24 carries the phosphotyrosine modification. Thr59 carries the post-translational modification Phosphothreonine. Lys264 is covalently cross-linked (Glycyl lysine isopeptide (Lys-Gly) (interchain with G-Cter in ubiquitin)). A Glycyl lysine isopeptide (Lys-Gly) (interchain with G-Cter in SUMO1); alternate cross-link involves residue Lys298. Lys298 is covalently cross-linked (Glycyl lysine isopeptide (Lys-Gly) (interchain with G-Cter in SUMO2); alternate). Positions 298–318 (KVEAKEESEESDEDMGFGLFD) are disordered. Positions 303 to 312 (EESEESDEDM) are enriched in acidic residues. Ser305 and Ser308 each carry phosphoserine.

This sequence belongs to the universal ribosomal protein uL10 family. As to quaternary structure, P0 forms a pentameric complex by interaction with dimers of P1 and P2. Identified in a IGF2BP1-dependent mRNP granule complex containing untranslated mRNAs. Interacts with APEX1. Interacts with FMR1 isoform 6. Ubiquitinated at Lys-264 by RNF14 and RNF25 in response to ribosome collisions (ribosome stalling).

It is found in the nucleus. It localises to the cytoplasm. Functionally, ribosomal protein P0 is the functional equivalent of E.coli protein L10. The chain is Large ribosomal subunit protein uL10 (RPLP0) from Oryctolagus cuniculus (Rabbit).